The primary structure comprises 561 residues: 4-coumarate--CoA ligase 3 (561 aa).

S213, S214, G215, T216, T217, and K221 together coordinate ATP. (E)-4-coumaroyl-AMP-binding residues include Y263 and S267. K284 serves as a coordination point for CoA. The SBD1 stretch occupies residues E286 to Q355. Positions 333, 355, 356, 360, and 368 each coordinate (E)-4-coumaroyl-AMP. ATP is bound by residues Q355, G356, and T360. The tract at residues G356–Y423 is SBD2. Residues D444 and R459 each coordinate ATP. (E)-4-coumaroyl-AMP is bound by residues K461 and K465. The CoA site is built by K467 and G468. K550 contributes to the ATP binding site.

The protein belongs to the ATP-dependent AMP-binding enzyme family. It depends on Mg(2+) as a cofactor. As to expression, preferentially expressed in leaves, flowers and siliques.

The enzyme catalyses (E)-4-coumarate + ATP + CoA = (E)-4-coumaroyl-CoA + AMP + diphosphate. It catalyses the reaction (E)-caffeate + ATP + CoA = (E)-caffeoyl-CoA + AMP + diphosphate. It carries out the reaction (E)-ferulate + ATP + CoA = (E)-feruloyl-CoA + AMP + diphosphate. The catalysed reaction is (E)-4-coumarate + ATP + H(+) = (E)-4-coumaroyl-AMP + diphosphate. The enzyme catalyses (E)-4-coumaroyl-AMP + CoA = (E)-4-coumaroyl-CoA + AMP + H(+). It catalyses the reaction (E)-caffeate + ATP + H(+) = (E)-caffeoyl-AMP + diphosphate. It carries out the reaction (E)-caffeoyl-AMP + CoA = (E)-caffeoyl-CoA + AMP + H(+). The catalysed reaction is (E)-ferulate + ATP + H(+) = (E)-feruloyl-AMP + diphosphate. The enzyme catalyses (E)-feruloyl-AMP + CoA = (E)-feruloyl-CoA + AMP + H(+). The protein operates within phytoalexin biosynthesis; 3,4',5-trihydroxystilbene biosynthesis; 3,4',5-trihydroxystilbene from trans-4-coumarate: step 1/2. Functionally, produces CoA thioesters of a variety of hydroxy- and methoxy-substituted cinnamic acids, which are used to synthesize several phenylpropanoid-derived compounds, including anthocyanins, flavonoids, isoflavonoids, coumarins, lignin, suberin and wall-bound phenolics. Follows a two-step reaction mechanism, wherein the carboxylate substrate first undergoes adenylation by ATP, followed by a thioesterification in the presence of CoA to yield the final CoA thioesters. This is 4-coumarate--CoA ligase 3 from Arabidopsis thaliana (Mouse-ear cress).